We begin with the raw amino-acid sequence, 393 residues long: Lipid-A-disaccharide synthase (393 aa).

This sequence belongs to the LpxB family.

It catalyses the reaction a lipid X + a UDP-2-N,3-O-bis[(3R)-3-hydroxyacyl]-alpha-D-glucosamine = a lipid A disaccharide + UDP + H(+). The protein operates within bacterial outer membrane biogenesis; LPS lipid A biosynthesis. Condensation of UDP-2,3-diacylglucosamine and 2,3-diacylglucosamine-1-phosphate to form lipid A disaccharide, a precursor of lipid A, a phosphorylated glycolipid that anchors the lipopolysaccharide to the outer membrane of the cell. The chain is Lipid-A-disaccharide synthase from Rhodopseudomonas palustris (strain ATCC BAA-98 / CGA009).